A 72-amino-acid polypeptide reads, in one-letter code: Translational regulator CsrA (72 aa).

This sequence belongs to the CsrA/RsmA family. As to quaternary structure, homodimer; the beta-strands of each monomer intercalate to form a hydrophobic core, while the alpha-helices form wings that extend away from the core.

It is found in the cytoplasm. In terms of biological role, a translational regulator that binds mRNA to regulate translation initiation and/or mRNA stability. Usually binds in the 5'-UTR at or near the Shine-Dalgarno sequence preventing ribosome-binding, thus repressing translation. Its main target seems to be the major flagellin gene, while its function is anatagonized by FliW. The chain is Translational regulator CsrA from Clostridium botulinum (strain ATCC 19397 / Type A).